The primary structure comprises 513 residues: ATP synthase subunit alpha (513 aa).

Residue 169 to 176 (GDRQTGKT) participates in ATP binding.

It belongs to the ATPase alpha/beta chains family. As to quaternary structure, F-type ATPases have 2 components, CF(1) - the catalytic core - and CF(0) - the membrane proton channel. CF(1) has five subunits: alpha(3), beta(3), gamma(1), delta(1), epsilon(1). CF(0) has three main subunits: a(1), b(2) and c(9-12). The alpha and beta chains form an alternating ring which encloses part of the gamma chain. CF(1) is attached to CF(0) by a central stalk formed by the gamma and epsilon chains, while a peripheral stalk is formed by the delta and b chains.

The protein localises to the cell inner membrane. The catalysed reaction is ATP + H2O + 4 H(+)(in) = ADP + phosphate + 5 H(+)(out). Functionally, produces ATP from ADP in the presence of a proton gradient across the membrane. The alpha chain is a regulatory subunit. This Yersinia enterocolitica serotype O:8 / biotype 1B (strain NCTC 13174 / 8081) protein is ATP synthase subunit alpha.